A 285-amino-acid polypeptide reads, in one-letter code: 2-hydroxy-6-oxononadienedioate/2-hydroxy-6-oxononatrienedioate hydrolase 1 (285 aa).

Histidine 265 (proton acceptor) is an active-site residue.

It belongs to the AB hydrolase superfamily. MhpC family. Homodimer.

It catalyses the reaction (2Z,4E)-2-hydroxy-6-oxonona-2,4-dienedioate + H2O = (2Z)-2-hydroxypenta-2,4-dienoate + succinate + H(+). It carries out the reaction (2Z,4E,7E)-2-hydroxy-6-oxonona-2,4,7-trienedioate + H2O = (2Z)-2-hydroxypenta-2,4-dienoate + fumarate + H(+). It participates in aromatic compound metabolism; 3-phenylpropanoate degradation. In terms of biological role, catalyzes the cleavage of the C5-C6 bond of 2-hydroxy-6-oxononadienedioate and 2-hydroxy-6-oxononatrienedioate, a dienol ring fission product of the bacterial meta-cleavage pathway for degradation of phenylpropionic acid. This is 2-hydroxy-6-oxononadienedioate/2-hydroxy-6-oxononatrienedioate hydrolase 1 from Pseudomonas putida (Arthrobacter siderocapsulatus).